The primary structure comprises 379 residues: Queuine tRNA-ribosyltransferase (379 aa).

Asp-94 functions as the Proton acceptor in the catalytic mechanism. Substrate contacts are provided by residues Asp-94–Phe-98, Asp-148, Gln-191, and Gly-218. Residues Gly-249–Ser-255 form an RNA binding region. The active-site Nucleophile is the Asp-268. Residues Thr-273–Arg-277 form an RNA binding; important for wobble base 34 recognition region. Zn(2+) contacts are provided by Cys-306, Cys-308, Cys-311, and His-337.

Belongs to the queuine tRNA-ribosyltransferase family. In terms of assembly, homodimer. Within each dimer, one monomer is responsible for RNA recognition and catalysis, while the other monomer binds to the replacement base PreQ1. Requires Zn(2+) as cofactor.

It catalyses the reaction 7-aminomethyl-7-carbaguanine + guanosine(34) in tRNA = 7-aminomethyl-7-carbaguanosine(34) in tRNA + guanine. The protein operates within tRNA modification; tRNA-queuosine biosynthesis. Its function is as follows. Catalyzes the base-exchange of a guanine (G) residue with the queuine precursor 7-aminomethyl-7-deazaguanine (PreQ1) at position 34 (anticodon wobble position) in tRNAs with GU(N) anticodons (tRNA-Asp, -Asn, -His and -Tyr). Catalysis occurs through a double-displacement mechanism. The nucleophile active site attacks the C1' of nucleotide 34 to detach the guanine base from the RNA, forming a covalent enzyme-RNA intermediate. The proton acceptor active site deprotonates the incoming PreQ1, allowing a nucleophilic attack on the C1' of the ribose to form the product. After dissociation, two additional enzymatic reactions on the tRNA convert PreQ1 to queuine (Q), resulting in the hypermodified nucleoside queuosine (7-(((4,5-cis-dihydroxy-2-cyclopenten-1-yl)amino)methyl)-7-deazaguanosine). This is Queuine tRNA-ribosyltransferase from Listeria monocytogenes serovar 1/2a (strain ATCC BAA-679 / EGD-e).